The sequence spans 75 residues: Protein CYSTEINE-RICH TRANSMEMBRANE MODULE 5 (75 aa).

Residues 1 to 29 (MSQYSQNQYAGAYPTPPVSTGPYVAPPPL) are disordered. The segment covering 14–29 (PTPPVSTGPYVAPPPL) has biased composition (pro residues). The helical transmembrane segment at 52 to 69 (AADGFLKGCLATMLACCV) threads the bilayer.

It belongs to the CYSTM1 family. In terms of assembly, heterodimers. Interacts with CYSTM7 and WIH1/CYSTM13. As to expression, mostly expressed in roots, stems, rosette leaves and siliques and, to a lower extent, in flowers and cauline leaves.

The protein localises to the cell membrane. It is found in the nucleus. Its function is as follows. Involved in resistance to abiotic stress. The protein is Protein CYSTEINE-RICH TRANSMEMBRANE MODULE 5 of Arabidopsis thaliana (Mouse-ear cress).